The following is a 93-amino-acid chain: Small ribosomal subunit protein uS19 (93 aa).

Belongs to the universal ribosomal protein uS19 family.

In terms of biological role, protein S19 forms a complex with S13 that binds strongly to the 16S ribosomal RNA. This Desulfitobacterium hafniense (strain Y51) protein is Small ribosomal subunit protein uS19.